A 368-amino-acid polypeptide reads, in one-letter code: MHIYKVGGAVRDRLLGRPVSDIDWLVVGATVEEMLANGYRPVGADFPVFLHPKTGEEYALARTERKSGRGYGGFTFHASPDVTLEEDLIRRDLTINAMAEDEAGTVYDPYQGKNDLDQRLLRHVSPAFAEDPLRVLRVARFAARYAPLGFRVADETLALMRQISASGELQALTAERSWKEIERALMEVQPQVFFKVLSACGALQELLPELDDGSRTLAALEQAAAHEQPLNVRWACLLRGLPPTSIKAVNQRLKAPRECQELAMLTGECLAQGNQALELPATALLELLQKFDVYRRPQRFEDFLTVCEMAARGDGEQGYPQADYLRGAAAAARAVDVKPLVQAGLTGQALGEALKGERLKALEAYQRG.

Positions 8 and 11 each coordinate ATP. 2 residues coordinate CTP: Gly-8 and Arg-11. Mg(2+) contacts are provided by Asp-21 and Asp-23. The ATP site is built by Arg-91, Arg-137, and Arg-140. Residues Arg-91, Arg-137, and Arg-140 each coordinate CTP.

Belongs to the tRNA nucleotidyltransferase/poly(A) polymerase family. Bacterial CCA-adding enzyme type 1 subfamily. Monomer. Can also form homodimers and oligomers. Mg(2+) serves as cofactor. It depends on Ni(2+) as a cofactor.

The catalysed reaction is a tRNA precursor + 2 CTP + ATP = a tRNA with a 3' CCA end + 3 diphosphate. It carries out the reaction a tRNA with a 3' CCA end + 2 CTP + ATP = a tRNA with a 3' CCACCA end + 3 diphosphate. Functionally, catalyzes the addition and repair of the essential 3'-terminal CCA sequence in tRNAs without using a nucleic acid template. Adds these three nucleotides in the order of C, C, and A to the tRNA nucleotide-73, using CTP and ATP as substrates and producing inorganic pyrophosphate. tRNA 3'-terminal CCA addition is required both for tRNA processing and repair. Also involved in tRNA surveillance by mediating tandem CCA addition to generate a CCACCA at the 3' terminus of unstable tRNAs. While stable tRNAs receive only 3'-terminal CCA, unstable tRNAs are marked with CCACCA and rapidly degraded. The sequence is that of Multifunctional CCA protein from Pseudomonas putida (strain ATCC 47054 / DSM 6125 / CFBP 8728 / NCIMB 11950 / KT2440).